The chain runs to 228 residues: Prolactin (228 aa).

The signal sequence occupies residues 1-29 (MCPKGSSVKGSLLLLLLMSSRFLFKAVES). A disulfide bridge links Cys-33 with Cys-40. 3 positions are modified to phosphoserine: Ser-55, Ser-63, and Ser-119. Cystine bridges form between Cys-87-Cys-203 and Cys-220-Cys-228.

The protein belongs to the somatotropin/prolactin family. Interacts with PRLR.

Its subcellular location is the secreted. Prolactin acts primarily on the mammary gland by promoting lactation. This is Prolactin (PRL) from Monodelphis domestica (Gray short-tailed opossum).